We begin with the raw amino-acid sequence, 452 residues long: Ethanolamine kinase 1 (452 aa).

The tract at residues 26 to 64 (AVQTRIGNSAASRRSPAARPPVPAPPALPRGRPGTEGST) is disordered. The segment covering 43 to 53 (ARPPVPAPPAL) has biased composition (pro residues).

This sequence belongs to the choline/ethanolamine kinase family. Expressed in kidney, liver, placenta, heart, leukocyte, ovary and testis.

The protein localises to the cytoplasm. The catalysed reaction is ethanolamine + ATP = phosphoethanolamine + ADP + H(+). The protein operates within phospholipid metabolism; phosphatidylethanolamine biosynthesis; phosphatidylethanolamine from ethanolamine: step 1/3. Its function is as follows. Highly specific for ethanolamine phosphorylation. May be a rate-controlling step in phosphatidylethanolamine biosynthesis. The polypeptide is Ethanolamine kinase 1 (Homo sapiens (Human)).